The primary structure comprises 324 residues: Glyceraldehyde-3-phosphate dehydrogenase 1 (324 aa).

NAD(+)-binding positions include 13 to 14, Asp35, and Lys85; that span reads RI. Residues 157-159, Thr188, 217-218, and Arg240 each bind D-glyceraldehyde 3-phosphate; these read SCT and TG. The active-site Nucleophile is Cys158. Asn322 contacts NAD(+).

This sequence belongs to the glyceraldehyde-3-phosphate dehydrogenase family. In terms of assembly, homotetramer.

Its subcellular location is the cytoplasm. The catalysed reaction is D-glyceraldehyde 3-phosphate + phosphate + NAD(+) = (2R)-3-phospho-glyceroyl phosphate + NADH + H(+). It participates in carbohydrate degradation; glycolysis; pyruvate from D-glyceraldehyde 3-phosphate: step 1/5. This is Glyceraldehyde-3-phosphate dehydrogenase 1 (GPD-1) from Globodera rostochiensis (Golden nematode worm).